The sequence spans 483 residues: Dual specificity protein phosphatase CDC14C (483 aa).

Residues 1–45 (MKRKSEGRSSWAAATCSPCCSLTSPSVKKIRSPTQQDPRHRDPQD) are disordered. The Nucleolar localization signal signature appears at 1–53 (MKRKSEGRSSWAAATCSPCCSLTSPSVKKIRSPTQQDPRHRDPQDDVYLDITD). Positions 12-26 (AAATCSPCCSLTSPS) are enriched in low complexity. The tract at residues 43 to 197 (PQDDVYLDIT…AMQYGFLNFN (155 aa)) is a. The linker stretch occupies residues 198-211 (SFNLDEYEHYEKAE). A b region spans residues 212-378 (NGDLNWIIPD…EGDYFCQKLK (167 aa)). The 161-residue stretch at 213 to 373 (GDLNWIIPDR…TSLWLEGDYF (161 aa)) folds into the Tyrosine-protein phosphatase domain. C313 serves as the catalytic Phosphocysteine intermediate. The tract at residues 407–426 (QDQQEPEPYSDDDEINGGTQ) is disordered. Acidic residues predominate over residues 408 to 421 (DQQEPEPYSDDDEI). The chain crosses the membrane as a helical span at residues 444–466 (ILLTCPLAVLTSALCSVVIWWIV).

The protein belongs to the protein-tyrosine phosphatase family. Non-receptor class CDC14 subfamily.

It is found in the membrane. It localises to the nucleus. The protein localises to the nucleolus. The protein resides in the cytoplasm. Its subcellular location is the cytoskeleton. It catalyses the reaction O-phospho-L-tyrosyl-[protein] + H2O = L-tyrosyl-[protein] + phosphate. The enzyme catalyses O-phospho-L-seryl-[protein] + H2O = L-seryl-[protein] + phosphate. The catalysed reaction is O-phospho-L-threonyl-[protein] + H2O = L-threonyl-[protein] + phosphate. Dual-specificity phosphatase. Preferentially dephosphorylates proteins modified by proline-directed kinases. This Symphalangus syndactylus (Siamang) protein is Dual specificity protein phosphatase CDC14C.